We begin with the raw amino-acid sequence, 97 residues long: UPF0235 protein AZOSEA09540 (97 aa).

It belongs to the UPF0235 family.

In Aromatoleum aromaticum (strain DSM 19018 / LMG 30748 / EbN1) (Azoarcus sp. (strain EbN1)), this protein is UPF0235 protein AZOSEA09540.